A 200-amino-acid chain; its full sequence is Probable molybdenum cofactor guanylyltransferase (200 aa).

GTP contacts are provided by residues 9–11 (LAG), lysine 21, aspartate 69, and aspartate 100. Aspartate 100 contacts Mg(2+).

The protein belongs to the MobA family. The cofactor is Mg(2+).

It localises to the cytoplasm. It carries out the reaction Mo-molybdopterin + GTP + H(+) = Mo-molybdopterin guanine dinucleotide + diphosphate. Functionally, transfers a GMP moiety from GTP to Mo-molybdopterin (Mo-MPT) cofactor (Moco or molybdenum cofactor) to form Mo-molybdopterin guanine dinucleotide (Mo-MGD) cofactor. The protein is Probable molybdenum cofactor guanylyltransferase of Bacillus thuringiensis (strain Al Hakam).